The chain runs to 149 residues: Probable flagellum biosynthesis repressor protein FlbT (149 aa).

Belongs to the FlbT family.

Functionally, has a post-transcriptional repressor function in flagellum biogenesis. Associates with the 5'-UTR of fljK mRNA and promotes its degradation. The polypeptide is Probable flagellum biosynthesis repressor protein FlbT (Rhizobium johnstonii (strain DSM 114642 / LMG 32736 / 3841) (Rhizobium leguminosarum bv. viciae)).